The primary structure comprises 623 residues: Actin-related protein 8 (623 aa).

The segment covering 1–24 has biased composition (basic and acidic residues); it reads MTQTDRDAENGRDREKDREKEQQR. Residues 1 to 29 are disordered; that stretch reads MTQTDRDAENGRDREKDREKEQQRGVKRP. Position 283 to 286 (283 to 286) interacts with ATP; it reads DVGD. The span at 428-438 shows a compositional bias: low complexity; that stretch reads TQSKQDQSSKA. The segment at 428-458 is disordered; that stretch reads TQSKQDQSSKASADRKSFPKPSSFEGESSVC.

The protein belongs to the actin family. ARP8 subfamily. In terms of assembly, component of the chromatin remodeling INO80 complex; specifically part of a complex module associated with the DBINO domain of INO80. Exists as monomers and dimers, but the dimer is most probably the biologically relevant form required for stable interactions with histones that exploits the twofold symmetry of the nucleosome core.

The protein resides in the nucleus. Its subcellular location is the chromosome. Plays an important role in the functional organization of mitotic chromosomes. Exhibits low basal ATPase activity, and unable to polymerize. Functionally, proposed core component of the chromatin remodeling INO80 complex which is involved in transcriptional regulation, DNA replication and probably DNA repair. Required for the recruitment of INO80 (and probably the INO80 complex) to sites of DNA damage Strongly prefer nucleosomes and H3-H4 tetramers over H2A-H2B dimers, suggesting it may act as a nucleosome recognition module within the complex. This is Actin-related protein 8 (actr8) from Danio rerio (Zebrafish).